A 224-amino-acid chain; its full sequence is Protein FAM3D (224 aa).

The signal sequence occupies residues 1 to 25 (MRVSGVLRLLALIFAIVTTWMFIRS). 2 disulfides stabilise this stretch: C55/C83 and C61/C218. A GG-type lectin domain is found at 64-222 (NYFAFKICSG…LEMEGCMPPK (159 aa)). N107 carries N-linked (GlcNAc...) asparagine glycosylation.

It belongs to the FAM3 family. In terms of tissue distribution, abundantly expressed in placenta and weakly expressed in small intestine.

It localises to the secreted. The protein is Protein FAM3D (FAM3D) of Homo sapiens (Human).